Reading from the N-terminus, the 212-residue chain is ATP-dependent dethiobiotin synthetase BioD (212 aa).

Position 12-17 (12-17) interacts with ATP; sequence DCGKTF. Thr16 contributes to the Mg(2+) binding site. Residue Lys33 is part of the active site. Ser37 serves as a coordination point for substrate. ATP contacts are provided by residues Asp50, 110-113, and 170-171; these read EGAG and NC. Asp50 and Glu110 together coordinate Mg(2+).

The protein belongs to the dethiobiotin synthetase family. In terms of assembly, homodimer. It depends on Mg(2+) as a cofactor.

It is found in the cytoplasm. The enzyme catalyses (7R,8S)-7,8-diammoniononanoate + CO2 + ATP = (4R,5S)-dethiobiotin + ADP + phosphate + 3 H(+). It functions in the pathway cofactor biosynthesis; biotin biosynthesis; biotin from 7,8-diaminononanoate: step 1/2. Its function is as follows. Catalyzes a mechanistically unusual reaction, the ATP-dependent insertion of CO2 between the N7 and N8 nitrogen atoms of 7,8-diaminopelargonic acid (DAPA, also called 7,8-diammoniononanoate) to form a ureido ring. The chain is ATP-dependent dethiobiotin synthetase BioD from Legionella pneumophila (strain Paris).